Consider the following 1250-residue polypeptide: Protein SSD1 (1250 aa).

The segment covering methionine 1–threonine 22 has biased composition (polar residues). Positions methionine 1–glutamine 32 are disordered. Position 2 is an N-acetylserine (serine 2). Serine 40 bears the Phosphoserine mark. The segment at threonine 79–histidine 163 is disordered. Polar residues predominate over residues serine 84–threonine 94. Residues asparagine 124 to asparagine 145 are compositionally biased toward low complexity. Residues serine 164 and serine 183 each carry the phosphoserine modification. Residues glutamine 197–glutamine 208 are compositionally biased toward polar residues. Disordered stretches follow at residues glutamine 197–lysine 338, lysine 418–aspartate 443, and serine 455–glutamate 517. At threonine 227 the chain carries Phosphothreonine. A compositionally biased stretch (polar residues) spans asparagine 264 to asparagine 276. A compositionally biased stretch (low complexity) spans glutamine 277 to proline 287. Residues serine 286 and serine 322 each carry the phosphoserine modification. Residues serine 319–glutamine 329 are compositionally biased toward polar residues. Residues serine 481–lysine 495 are compositionally biased toward polar residues. A phosphoserine mark is found at serine 491 and serine 492. The span at glycine 497–glutamine 510 shows a compositional bias: basic residues. The 76-residue stretch at alanine 582–asparagine 657 folds into the CSD2 domain. Tyrosine 688 carries the post-translational modification Phosphotyrosine. Residues aspartate 694–histidine 1015 form the RNB domain. Residues glycine 1064–alanine 1148 enclose the DIS3L2 C-terminal domain.

It belongs to the RNR ribonuclease family.

Can suppress the lethality due to deletion of SIT4, and partially the defects due to BCY1 disruption. Is implicated in the control of the cell cycle G1 phase. The protein is Protein SSD1 (SSD1) of Saccharomyces cerevisiae (strain ATCC 204508 / S288c) (Baker's yeast).